The primary structure comprises 740 residues: Ion-translocating oxidoreductase complex subunit C (740 aa).

4Fe-4S ferredoxin-type domains follow at residues 369 to 397 and 407 to 436; these read GEPQ…QQLY and KATT…VQYF. Residues Cys377, Cys380, Cys383, Cys387, Cys416, Cys419, Cys422, and Cys426 each contribute to the [4Fe-4S] cluster site. Disordered regions lie at residues 602 to 621 and 660 to 718; these read KLEQ…PRKA and ARAK…RKAA. Basic and acidic residues predominate over residues 611 to 621; the sequence is KPEEQVDPRKA.

Belongs to the 4Fe4S bacterial-type ferredoxin family. RnfC subfamily. In terms of assembly, the complex is composed of six subunits: RsxA, RsxB, RsxC, RsxD, RsxE and RsxG. The cofactor is [4Fe-4S] cluster.

The protein resides in the cell inner membrane. Functionally, part of a membrane-bound complex that couples electron transfer with translocation of ions across the membrane. Required to maintain the reduced state of SoxR. The chain is Ion-translocating oxidoreductase complex subunit C from Escherichia coli O9:H4 (strain HS).